The primary structure comprises 379 residues: Queuine tRNA-ribosyltransferase (379 aa).

Aspartate 94 acts as the Proton acceptor in catalysis. Substrate is bound by residues 94–98 (DSGGF), aspartate 148, glutamine 191, and glycine 218. The interval 249-255 (GVGSPDS) is RNA binding. Aspartate 268 functions as the Nucleophile in the catalytic mechanism. An RNA binding; important for wobble base 34 recognition region spans residues 273 to 277 (TRIAR). Zn(2+) contacts are provided by cysteine 306, cysteine 308, cysteine 311, and histidine 337.

This sequence belongs to the queuine tRNA-ribosyltransferase family. In terms of assembly, homodimer. Within each dimer, one monomer is responsible for RNA recognition and catalysis, while the other monomer binds to the replacement base PreQ1. The cofactor is Zn(2+).

It carries out the reaction 7-aminomethyl-7-carbaguanine + guanosine(34) in tRNA = 7-aminomethyl-7-carbaguanosine(34) in tRNA + guanine. It participates in tRNA modification; tRNA-queuosine biosynthesis. Functionally, catalyzes the base-exchange of a guanine (G) residue with the queuine precursor 7-aminomethyl-7-deazaguanine (PreQ1) at position 34 (anticodon wobble position) in tRNAs with GU(N) anticodons (tRNA-Asp, -Asn, -His and -Tyr). Catalysis occurs through a double-displacement mechanism. The nucleophile active site attacks the C1' of nucleotide 34 to detach the guanine base from the RNA, forming a covalent enzyme-RNA intermediate. The proton acceptor active site deprotonates the incoming PreQ1, allowing a nucleophilic attack on the C1' of the ribose to form the product. After dissociation, two additional enzymatic reactions on the tRNA convert PreQ1 to queuine (Q), resulting in the hypermodified nucleoside queuosine (7-(((4,5-cis-dihydroxy-2-cyclopenten-1-yl)amino)methyl)-7-deazaguanosine). This is Queuine tRNA-ribosyltransferase from Halalkalibacterium halodurans (strain ATCC BAA-125 / DSM 18197 / FERM 7344 / JCM 9153 / C-125) (Bacillus halodurans).